A 653-amino-acid chain; its full sequence is Macrolide export ATP-binding/permease protein MacB (653 aa).

The ABC transporter domain occupies 6–244; it reads LQLTRVTRRF…DAASGASGDA (239 aa). 42–49 is an ATP binding site; sequence GASGSGKS. Transmembrane regions (helical) follow at residues 278–298, 526–546, 587–607, and 616–636; these read LLTMLGIIIGITSVVSIVAIG, LTLLLSLIAVISLVVGGIGVM, MGGAIGIVLSLGMSFVFSLFV, and AGSIVSAFLCSTLIGVVFGFM.

It belongs to the ABC transporter superfamily. Macrolide exporter (TC 3.A.1.122) family. Homodimer.

It is found in the cell inner membrane. Functionally, non-canonical ABC transporter that contains transmembrane domains (TMD), which form a pore in the inner membrane, and an ATP-binding domain (NBD), which is responsible for energy generation. Confers resistance against macrolides. This chain is Macrolide export ATP-binding/permease protein MacB, found in Burkholderia thailandensis (strain ATCC 700388 / DSM 13276 / CCUG 48851 / CIP 106301 / E264).